The chain runs to 315 residues: Transcription factor MafAa (315 aa).

Positions 52–104 are enriched in low complexity; it reads STPISTPCSSVPSSPSFCAPSPGSQPGQNLVNGVNNNNNNSGNGNNNTQGSSG. 2 disordered regions span residues 52–108 and 169–191; these read STPI…KPQM and ATNGHHHPVHHHHHHHGHHAHAR. The span at 172 to 189 shows a compositional bias: basic residues; that stretch reads GHHHPVHHHHHHHGHHAH. Residues 223 to 248 form a basic motif region; that stretch reads RLKQKRRTLKNRGYAQSCRYKRVQQR. The 64-residue stretch at 223 to 286 folds into the bZIP domain; the sequence is RLKQKRRTLK…DLYKEKYEKL (64 aa). Residues 229–243 are interaction with DNA; that stretch reads RTLKNRGYAQSCRYK. The segment at 251 to 272 is leucine-zipper; it reads LESEKCTLQSQVEQLKQDVARL. The tract at residues 290–315 is disordered; it reads AFNGGGNTRDPSSGNHVKTTSTDFFM. Positions 298–315 are enriched in polar residues; that stretch reads RDPSSGNHVKTTSTDFFM.

The protein belongs to the bZIP family. Maf subfamily.

The protein resides in the nucleus. Functionally, transcription factor, possibly involved in transcription regulation during lens development, including that of crystallin genes. Specifically binds to the alphaCE2 enhancer element of crystallin gene. This is Transcription factor MafAa (mafaa) from Danio rerio (Zebrafish).